The following is a 767-amino-acid chain: Transferrin receptor protein 1 (767 aa).

The Cytoplasmic portion of the chain corresponds to 1 to 67 (MDQARSAFSN…LTKPKRFNGS (67 aa)). Phosphoserine occurs at positions 9 and 18. Tyr-19 is subject to Phosphotyrosine. Positions 19–22 (YTRF) match the Endocytosis signal motif. Phosphothreonine is present on Thr-20. Ser-23 is subject to Phosphoserine. Positions 60-63 (KPKR) match the Stop-transfer sequence motif. Residues 68-88 (FCYAVIAVIIFFLIGFMIGYL) form a helical; Signal-anchor for type II membrane protein membrane-spanning segment. Cys-69 carries S-palmitoyl cysteine lipidation. Topologically, residues 89-767 (GYCKRVEPKS…GDIWDIDNEF (679 aa)) are extracellular. Basic and acidic residues predominate over residues 96 to 110 (PKSECGRSGDSKEIE). The disordered stretch occupies residues 96–122 (PKSECGRSGDSKEIEGTEPPETEEYFP). Positions 111–121 (GTEPPETEEYF) are enriched in acidic residues. Asn-211, Asn-258, and Asn-324 each carry an N-linked (GlcNAc...) asparagine glycan. Positions 230–320 (SKATTVTGKL…GTGDPYTPGF (91 aa)) constitute a PA domain. The ligand-binding stretch occupies residues 576-767 (TMDTYEVLSQ…GDIWDIDNEF (192 aa)). The short motif at 653–655 (RGD) is the Cell attachment site element. N-linked (GlcNAc...) asparagine glycosylation is present at Asn-734.

The protein belongs to the peptidase M28 family. M28B subfamily. In terms of assembly, homodimer; disulfide-linked. Binds one transferrin or HFE molecule per subunit. Interacts with SH3BP4. Interacts with STEAP3; facilitates TFRC endocytosis in erythroid precursor cells. Stearoylated by ZDHHC6 which inhibits TFRC-mediated activation of the JNK pathway and promotes mitochondrial fragmentation. Stearoylation does not affect iron uptake.

The protein resides in the cell membrane. It localises to the melanosome. Cellular uptake of iron occurs via receptor-mediated endocytosis of ligand-occupied transferrin receptor into specialized endosomes. Endosomal acidification leads to iron release. The apotransferrin-receptor complex is then recycled to the cell surface with a return to neutral pH and the concomitant loss of affinity of apotransferrin for its receptor. Transferrin receptor is necessary for development of erythrocytes and the nervous system. Positively regulates T and B cell proliferation through iron uptake. Acts as a lipid sensor that regulates mitochondrial fusion by regulating activation of the JNK pathway. When dietary levels of stearate (C18:0) are low, promotes activation of the JNK pathway, resulting in HUWE1-mediated ubiquitination and subsequent degradation of the mitofusin MFN2 and inhibition of mitochondrial fusion. When dietary levels of stearate (C18:0) are high, TFRC stearoylation inhibits activation of the JNK pathway and thus degradation of the mitofusin MFN2. Mediates uptake of NICOL1 into fibroblasts where it may regulate extracellular matrix production. This chain is Transferrin receptor protein 1 (TFRC), found in Equus caballus (Horse).